The chain runs to 90 residues: Small ribosomal subunit protein uS15 (90 aa).

This sequence belongs to the universal ribosomal protein uS15 family. Part of the 30S ribosomal subunit. Forms a bridge to the 50S subunit in the 70S ribosome, contacting the 23S rRNA.

In terms of biological role, one of the primary rRNA binding proteins, it binds directly to 16S rRNA where it helps nucleate assembly of the platform of the 30S subunit by binding and bridging several RNA helices of the 16S rRNA. Its function is as follows. Forms an intersubunit bridge (bridge B4) with the 23S rRNA of the 50S subunit in the ribosome. In Paraburkholderia xenovorans (strain LB400), this protein is Small ribosomal subunit protein uS15.